The following is an 823-amino-acid chain: Molybdenum cofactor sulfurase (823 aa).

Lys228 bears the N6-(pyridoxal phosphate)lysine mark. Residue Cys392 is part of the active site. The segment at Ser628–Pro667 is disordered. The region spanning Ser644–Ser819 is the MOSC domain.

This sequence belongs to the class-V pyridoxal-phosphate-dependent aminotransferase family. MOCOS subfamily. Requires pyridoxal 5'-phosphate as cofactor.

It catalyses the reaction Mo-molybdopterin + L-cysteine + AH2 = thio-Mo-molybdopterin + L-alanine + A + H2O. Its pathway is cofactor biosynthesis; molybdopterin biosynthesis. Its function is as follows. Sulfurates the molybdenum cofactor. Sulfation of molybdenum is essential for xanthine dehydrogenase (XDH) and aldehyde oxidase (ADO) enzymes in which molybdenum cofactor is liganded by 1 oxygen and 1 sulfur atom in active form. The polypeptide is Molybdenum cofactor sulfurase (Aspergillus niger (strain ATCC MYA-4892 / CBS 513.88 / FGSC A1513)).